The primary structure comprises 193 residues: Ribosome maturation factor RimM (193 aa).

A PRC barrel domain is found at 112 to 193 (VDEYYWIDLI…CITVDWGLDF (82 aa)).

Belongs to the RimM family. Binds ribosomal protein uS19.

The protein resides in the cytoplasm. Its function is as follows. An accessory protein needed during the final step in the assembly of 30S ribosomal subunit, possibly for assembly of the head region. Essential for efficient processing of 16S rRNA. May be needed both before and after RbfA during the maturation of 16S rRNA. It has affinity for free ribosomal 30S subunits but not for 70S ribosomes. The polypeptide is Ribosome maturation factor RimM (Methylibium petroleiphilum (strain ATCC BAA-1232 / LMG 22953 / PM1)).